Here is a 504-residue protein sequence, read N- to C-terminus: MFS antiporter QDR2 (504 aa).

Over residues 1–14 (MLSTTQSVTEPTEV) the composition is skewed to polar residues. The tract at residues 1 to 23 (MLSTTQSVTEPTEVTSKKVEDIE) is disordered. Topologically, residues 1-41 (MLSTTQSVTEPTEVTSKKVEDIEKENDEETPYSIFTSYDRL) are cytoplasmic. Residues 42-62 (VLIVILSLIGFWSTISSPIYF) traverse the membrane as a helical segment. Over 63-75 (PALPTLTSYFHTS) the chain is Extracellular. Residues 76-96 (SSIMNISVVAYLIFQGIAPTI) traverse the membrane as a helical segment. The Cytoplasmic segment spans residues 97-106 (SSNLADTFGR). Residues 107-129 (RPVILASIIVFCASCVAISQTNV) traverse the membrane as a helical segment. Residues 130–132 (YWL) lie on the Extracellular side of the membrane. A helical transmembrane segment spans residues 133 to 155 (LAVLRCIQAAGIAAVISISSGVA). Residues 156 to 169 (GDVCTRANRGSMVG) are Cytoplasmic-facing. A helical transmembrane segment spans residues 170 to 190 (AVAGLQLVGNGIGGLVGAALI). The Extracellular portion of the chain corresponds to 191–198 (SSFNSWRS). The chain crosses the membrane as a helical span at residues 199–219 (IFIFLTIGGGVTFILAIFILP). Residues 220–278 (ETSRKLVGNGSVVPKNILNKSPYIYLPHFKKRMNNDITTIVPATRFDLLGPLKIFFQKN) lie on the Cytoplasmic side of the membrane. The chain crosses the membrane as a helical span at residues 279–299 (VFCTLLPVGIHFAAWTMVLTS). At 300 to 311 (LSTELESRYHYS) the chain is on the extracellular side. Residues 312–332 (VMHVGLIYLPQGIACIAGSLV) traverse the membrane as a helical segment. Over 333–370 (VGKSLDWYYRYRKTIYDQEVECLPLDERPQFNIVATRL) the chain is Cytoplasmic. The helical transmembrane segment at 371–391 (TLSVVPALLMIIGLVIFGWCI) threads the bilayer. Residues 392-396 (QYKRH) are Extracellular-facing. A helical membrane pass occupies residues 397–417 (IISIIISTILVSFSASVFIAI). At 418–438 (CTTMLVDLYPNNGSGSTSCLN) the chain is on the cytoplasmic side. The chain crosses the membrane as a helical span at residues 439-456 (LMRCWLAALGAGVLDSMI). Over 457–460 (NAMN) the chain is Extracellular. A helical transmembrane segment spans residues 461–483 (VGGTYTVVAGFCILFDLALIYVL). The Cytoplasmic segment spans residues 484-504 (HNAKKKFSNSGPTTTKSPPKQ).

It belongs to the major facilitator superfamily. CAR1 family.

The protein localises to the cell membrane. In terms of biological role, MFS antiporter that does not display functional linkage as drug transporter and performs functions that significantly affect biofilm development and virulence. No substrate for transport has been identified yet, but plays an important role in the growth in the host. The sequence is that of MFS antiporter QDR2 (QDR2) from Candida albicans (strain SC5314 / ATCC MYA-2876) (Yeast).